A 225-amino-acid chain; its full sequence is UPF0725 protein At5g63820 (225 aa).

The protein belongs to the UPF0725 (EMB2204) family.

The chain is UPF0725 protein At5g63820 from Arabidopsis thaliana (Mouse-ear cress).